The primary structure comprises 302 residues: Protein transport protein SEC13 homolog A (302 aa).

6 WD repeats span residues 9 to 48 (GHSDTIHDVVMDYYGKRVATASSDCTIKITGVSNSGGSQH), 54 to 95 (GHRG…QWTQ), 101 to 142 (DHKV…GWDT), 148 to 201 (AHPV…WKMD), 208 to 251 (KHTD…EQWE), and 257 to 296 (DFKTPVWRVSWSLTGNLLAVSDGNNNVTVWKESVDGEWEQ).

This sequence belongs to the WD repeat SEC13 family. As to quaternary structure, interacts with MAG5, SEC31A and SEC31B.

Its subcellular location is the golgi apparatus. The protein resides in the endoplasmic reticulum. Functionally, required for protein transport from the endoplasmic reticulum to the Golgi apparatus. In Arabidopsis thaliana (Mouse-ear cress), this protein is Protein transport protein SEC13 homolog A.